A 409-amino-acid chain; its full sequence is Argininosuccinate synthase (409 aa).

ATP-binding positions include 16 to 24 (AYSGGLDTS) and A44. The L-citrulline site is built by Y96 and S101. G126 contacts ATP. L-aspartate contacts are provided by T128, N132, and D133. N132 contacts L-citrulline. L-citrulline-binding residues include R136, S185, S194, E270, and Y282.

This sequence belongs to the argininosuccinate synthase family. Type 1 subfamily. In terms of assembly, homotetramer.

The protein localises to the cytoplasm. It catalyses the reaction L-citrulline + L-aspartate + ATP = 2-(N(omega)-L-arginino)succinate + AMP + diphosphate + H(+). Its pathway is amino-acid biosynthesis; L-arginine biosynthesis; L-arginine from L-ornithine and carbamoyl phosphate: step 2/3. This Shewanella piezotolerans (strain WP3 / JCM 13877) protein is Argininosuccinate synthase.